Consider the following 379-residue polypeptide: Alcohol dehydrogenase class-3 (379 aa).

Position 2 is an N-acetylserine (Ser-2). Positions 48, 70, 100, 103, 106, 114, and 177 each coordinate Zn(2+).

Belongs to the zinc-containing alcohol dehydrogenase family. Class-III subfamily. The cofactor is Zn(2+).

It catalyses the reaction a primary alcohol + NAD(+) = an aldehyde + NADH + H(+). The enzyme catalyses a secondary alcohol + NAD(+) = a ketone + NADH + H(+). The catalysed reaction is S-(hydroxymethyl)glutathione + NADP(+) = S-formylglutathione + NADPH + H(+). It carries out the reaction S-(hydroxymethyl)glutathione + NAD(+) = S-formylglutathione + NADH + H(+). It catalyses the reaction octan-1-ol + NAD(+) = octanal + NADH + H(+). Its function is as follows. Class-III ADH is remarkably ineffective in oxidizing ethanol, but it readily catalyzes the oxidation of long-chain primary alcohols and the oxidation of S-(hydroxymethyl) glutathione. This Drosophila melanogaster (Fruit fly) protein is Alcohol dehydrogenase class-3 (Fdh).